A 132-amino-acid chain; its full sequence is Chemokine-like protein TAFA-5 (132 aa).

An N-terminal signal peptide occupies residues 1–43; that stretch reads MAPSPRTSSRQDATALPSMSSTFWAFMILASLLIAYCSQLAAG. An N-linked (GlcNAc...) asparagine glycan is attached at Asn-113.

Belongs to the TAFA family. As to expression, expressed in the subcutaneous, brown, epididymal and perirenal adipose tissue (at protein level).

The protein resides in the secreted. In terms of biological role, acts as a chemokine-like protein by regulating cell proliferation and migration through activation of G protein-coupled receptors (GPCRs), such as S1PR2 and FPR2. Stimulates chemotactic migration of macrophages mediated by the MAPK3/ERK1 and AKT1 pathway. Blocks TNFSF11/RANKL-induced osteoclast formation from macrophages by inhibiting up-regulation of osteoclast fusogenic and differentiation genes. Stimulation of macrophage migration and inhibition of osteoclast formation is mediated through the GPCR FPR2. Acts as an adipokine by negatively regulating vascular smooth muscle cell (VSMC) proliferation and migration in response to platelet-derived growth factor stimulation via GPCR S1PR2 and G protein GNA12/GNA13-transmitted RHOA signaling. Inhibits injury-induced cell proliferation and neointima formation in the femoral arteries. The sequence is that of Chemokine-like protein TAFA-5 (Tafa5) from Mus musculus (Mouse).